Reading from the N-terminus, the 83-residue chain is Sulfur carrier protein TusA (83 aa).

The Cysteine persulfide intermediate role is filled by cysteine 19.

Belongs to the sulfur carrier protein TusA family.

The protein localises to the cytoplasm. Its function is as follows. Sulfur carrier protein which probably makes part of a sulfur-relay system. This is Sulfur carrier protein TusA from Aliivibrio salmonicida (strain LFI1238) (Vibrio salmonicida (strain LFI1238)).